Here is a 111-residue protein sequence, read N- to C-terminus: C-type lectin lectoxin-Enh1 (111 aa).

A signal peptide spans 1–23 (MGQFTVVSLGLLAMFLSLSGAKG). Residues cysteine 26 and cysteine 37 are joined by a disulfide bond. A C-type lectin domain is found at 33 to 108 (RNGVCNKLFP…CASLHPFICQ (76 aa)). A Mannose-binding motif is present at residues 72–74 (EPN). Glutamate 80, asparagine 95, and aspartate 96 together coordinate Ca(2+). Cysteine 82 and cysteine 99 are disulfide-bonded.

The protein belongs to the true venom lectin family. In terms of tissue distribution, expressed by the venom gland.

It localises to the secreted. Its function is as follows. Mannose-binding lectin which recognizes specific carbohydrate structures and agglutinates a variety of animal cells by binding to cell-surface glycoproteins and glycolipids. May be a calcium-dependent lectin. In Pseudoferania polylepis (Macleay's water snake), this protein is C-type lectin lectoxin-Enh1.